The chain runs to 359 residues: 3-dehydroquinate synthase (359 aa).

Residues Asp-71–Lys-76, Gly-105–Asp-109, Thr-129–Thr-130, Lys-142, Lys-151, and Thr-169–Thr-172 contribute to the NAD(+) site. 3 residues coordinate Zn(2+): Glu-184, His-247, and His-264.

It belongs to the sugar phosphate cyclases superfamily. Dehydroquinate synthase family. Co(2+) serves as cofactor. Zn(2+) is required as a cofactor. The cofactor is NAD(+).

The protein resides in the cytoplasm. The catalysed reaction is 7-phospho-2-dehydro-3-deoxy-D-arabino-heptonate = 3-dehydroquinate + phosphate. It functions in the pathway metabolic intermediate biosynthesis; chorismate biosynthesis; chorismate from D-erythrose 4-phosphate and phosphoenolpyruvate: step 2/7. Catalyzes the conversion of 3-deoxy-D-arabino-heptulosonate 7-phosphate (DAHP) to dehydroquinate (DHQ). This is 3-dehydroquinate synthase from Neisseria meningitidis serogroup C (strain 053442).